Here is a 540-residue protein sequence, read N- to C-terminus: Beta-2-syntrophin (540 aa).

The tract at residues 73-114 (LPNGGGAGDSLPGSPSRGLGPPSPPAPPRGPAGEAGASPPVR) is disordered. Residues 81–92 (DSLPGSPSRGLG) show a composition bias toward low complexity. A compositionally biased stretch (pro residues) spans 93–102 (PPSPPAPPRG). A phosphoserine mark is found at Ser95, Ser110, Ser129, Ser211, Ser222, Ser233, Ser393, and Ser395. Over residues 103–112 (PAGEAGASPP) the composition is skewed to low complexity. In terms of domain architecture, PDZ spans 115–198 (RVRVVKQEAG…EVLLEVKFIR (84 aa)). PH domains follow at residues 163–300 (ILSV…TNIM) and 325–437 (EVKH…QGCH). Residues 220 to 240 (PQSPSFSGSEDSGSPKHQNST) form a disordered region. Positions 222-231 (SPSFSGSEDS) are enriched in low complexity. Residues 484-540 (PFERLKMSADDGIRNLYLDFGGPEGELTMDLHSCPKPIVFVLHTFLSAKVTRMGLLV) enclose the SU domain. The calmodulin-binding stretch occupies residues 518–540 (PKPIVFVLHTFLSAKVTRMGLLV).

This sequence belongs to the syntrophin family. As to quaternary structure, monomer and homodimer. Interacts with the other members of the syntrophin family: SNTA1 and SNTB1; and with the sodium channel proteins SCN4A and SCN5A. Interacts with SAST, MAST205, microtubules and microtubule-associated proteins. Interacts with the dystrophin protein DMD and related proteins DTNA and UTRN, and with the neuroregulin receptor ERBB4. Interacts with PTPRN when phosphorylated, protecting PTPRN from protein cleavage by CAPN1. Dephosphorylation upon insulin stimulation disrupts the interaction with PTPRN and results in the cleavage of PTPRN. Interacts with DTNB. In terms of processing, phosphorylated. Partially dephosphorylated upon insulin stimulation. Ubiquitous. Isoform 1 is the predominant isoform. Weak level of isoform 2 is present in all tested tissues, except in liver and heart where it is highly expressed.

Its subcellular location is the membrane. The protein localises to the cytoplasmic vesicle. It is found in the secretory vesicle membrane. The protein resides in the cell junction. It localises to the cytoplasm. Its subcellular location is the cytoskeleton. Adapter protein that binds to and probably organizes the subcellular localization of a variety of membrane proteins. May link various receptors to the actin cytoskeleton and the dystrophin glycoprotein complex. May play a role in the regulation of secretory granules via its interaction with PTPRN. The chain is Beta-2-syntrophin (SNTB2) from Homo sapiens (Human).